The sequence spans 254 residues: Type III pantothenate kinase (254 aa).

6-13 is an ATP binding site; the sequence is DVGNTNTV. Residues Tyr-100 and 107–110 each bind substrate; that span reads GADR. The Proton acceptor role is filled by Asp-109. Asp-129 contacts K(+). Thr-132 contacts ATP. Thr-184 serves as a coordination point for substrate.

It belongs to the type III pantothenate kinase family. Homodimer. Requires NH4(+) as cofactor. K(+) is required as a cofactor.

The protein localises to the cytoplasm. The catalysed reaction is (R)-pantothenate + ATP = (R)-4'-phosphopantothenate + ADP + H(+). Its pathway is cofactor biosynthesis; coenzyme A biosynthesis; CoA from (R)-pantothenate: step 1/5. Its function is as follows. Catalyzes the phosphorylation of pantothenate (Pan), the first step in CoA biosynthesis. The sequence is that of Type III pantothenate kinase from Syntrophus aciditrophicus (strain SB).